The sequence spans 427 residues: Adenylosuccinate synthetase (427 aa).

GTP-binding positions include Gly12–Lys18 and Gly40–Thr42. Asp13 functions as the Proton acceptor in the catalytic mechanism. Positions 13 and 40 each coordinate Mg(2+). IMP-binding positions include Asp13–Lys16, Asn38–His41, Thr128, Arg142, Gln223, Thr238, and Arg302. His41 functions as the Proton donor in the catalytic mechanism. Thr298–Arg304 is a substrate binding site. GTP-binding positions include Arg304, Ser330–Asp332, and Ser412–Gly414.

The protein belongs to the adenylosuccinate synthetase family. As to quaternary structure, homodimer. Mg(2+) is required as a cofactor.

The protein resides in the cytoplasm. It carries out the reaction IMP + L-aspartate + GTP = N(6)-(1,2-dicarboxyethyl)-AMP + GDP + phosphate + 2 H(+). The protein operates within purine metabolism; AMP biosynthesis via de novo pathway; AMP from IMP: step 1/2. Plays an important role in the de novo pathway of purine nucleotide biosynthesis. Catalyzes the first committed step in the biosynthesis of AMP from IMP. The protein is Adenylosuccinate synthetase of Staphylococcus epidermidis (strain ATCC 12228 / FDA PCI 1200).